Reading from the N-terminus, the 355-residue chain is Alanine racemase (355 aa).

K34 functions as the Proton acceptor; specific for D-alanine in the catalytic mechanism. K34 bears the N6-(pyridoxal phosphate)lysine mark. Position 133 (R133) interacts with substrate. Y249 acts as the Proton acceptor; specific for L-alanine in catalysis. Position 297 (M297) interacts with substrate.

Belongs to the alanine racemase family. Pyridoxal 5'-phosphate is required as a cofactor.

It catalyses the reaction L-alanine = D-alanine. The protein operates within amino-acid biosynthesis; D-alanine biosynthesis; D-alanine from L-alanine: step 1/1. Catalyzes the interconversion of L-alanine and D-alanine. May also act on other amino acids. The sequence is that of Alanine racemase (alr) from Rickettsia akari (strain Hartford).